Consider the following 56-residue polypeptide: Calsequestrin-1 (56 aa).

The residue at position 9 (Tyr-9) is a Phosphotyrosine. Position 47 is a phosphoserine (Ser-47).

The protein belongs to the calsequestrin family. Monomer; increases in response to a depletion of intracellular calcium. Homodimer. Homotetramer and homopolymer. Can form linear homooligomers. Ca(2+) ions promote oligomerization. Interacts (via C-terminal end and preferentially with the monomeric form) with STIM1; this interaction increases in response to a depletion of intracellular calcium, decreases both STIM1 aggregation and clustering, interaction of STIM1 with ORAI1 and store-operated Ca(2+) entry (SOCE) activity. Interacts with ASPH and TRDN. Post-translationally, N-glycosylated.

It localises to the endoplasmic reticulum. The protein resides in the sarcoplasmic reticulum. It is found in the sarcoplasmic reticulum lumen. Its subcellular location is the sarcoplasmic reticulum membrane. The protein localises to the mitochondrion matrix. In terms of biological role, calsequestrin is a high-capacity, moderate affinity, calcium-binding protein and thus acts as an internal calcium store in muscle. Calcium ions are bound by clusters of acidic residues at the protein surface, often at the interface between subunits. Can bind around 80 Ca(2+) ions. Regulates the release of lumenal Ca(2+) via the calcium release channel RYR1; this plays an important role in triggering muscle contraction. Negatively regulates store-operated Ca(2+) entry (SOCE) activity. The protein is Calsequestrin-1 (CASQ1) of Canis lupus familiaris (Dog).